The sequence spans 231 residues: Ribonuclease 3 (231 aa).

The region spanning 7–135 (IQAIESKLNF…ILGAVYLDGG (129 aa)) is the RNase III domain. Position 48 (Glu-48) interacts with Mg(2+). Residue Asp-52 is part of the active site. Asn-121 and Glu-124 together coordinate Mg(2+). Glu-124 is an active-site residue. The DRBM domain occupies 160 to 229 (NPKNRLQQFT…AKQALSTHDN (70 aa)).

This sequence belongs to the ribonuclease III family. As to quaternary structure, homodimer. Mg(2+) is required as a cofactor.

Its subcellular location is the cytoplasm. The catalysed reaction is Endonucleolytic cleavage to 5'-phosphomonoester.. Digests double-stranded RNA. Involved in the processing of primary rRNA transcript to yield the immediate precursors to the large and small rRNAs (23S and 16S). Processes some mRNAs, and tRNAs when they are encoded in the rRNA operon. Processes pre-crRNA and tracrRNA of type II CRISPR loci if present in the organism. The protein is Ribonuclease 3 of Chlamydia trachomatis serovar L2 (strain ATCC VR-902B / DSM 19102 / 434/Bu).